Consider the following 52-residue polypeptide: uncharacterized protein (52 aa).

This is an uncharacterized protein from Saccharomyces cerevisiae (strain ATCC 204508 / S288c) (Baker's yeast).